A 544-amino-acid polypeptide reads, in one-letter code: Chaperonin GroEL (544 aa).

ATP is bound by residues 30–33 (TLGP), 87–91 (DGTTT), G414, 478–480 (NAL), and D494.

The protein belongs to the chaperonin (HSP60) family. Forms a cylinder of 14 subunits composed of two heptameric rings stacked back-to-back. Interacts with the co-chaperonin GroES.

It is found in the cytoplasm. The enzyme catalyses ATP + H2O + a folded polypeptide = ADP + phosphate + an unfolded polypeptide.. In terms of biological role, together with its co-chaperonin GroES, plays an essential role in assisting protein folding. The GroEL-GroES system forms a nano-cage that allows encapsulation of the non-native substrate proteins and provides a physical environment optimized to promote and accelerate protein folding. This is Chaperonin GroEL from Pelotomaculum thermopropionicum (strain DSM 13744 / JCM 10971 / SI).